The primary structure comprises 200 residues: Small ribosomal subunit protein uS4 (200 aa).

The tract at residues 22-42 is disordered; the sequence is TGKELQKRPYPPGQHGPGQRR. The S4 RNA-binding domain maps to 92 to 152; sequence SRLDNLVYRL…EKSRNLQVIK (61 aa).

Belongs to the universal ribosomal protein uS4 family. In terms of assembly, part of the 30S ribosomal subunit. Contacts protein S5. The interaction surface between S4 and S5 is involved in control of translational fidelity.

One of the primary rRNA binding proteins, it binds directly to 16S rRNA where it nucleates assembly of the body of the 30S subunit. Functionally, with S5 and S12 plays an important role in translational accuracy. The sequence is that of Small ribosomal subunit protein uS4 (rpsD) from Geobacillus stearothermophilus (Bacillus stearothermophilus).